A 423-amino-acid chain; its full sequence is MSIQIPRGTQDILPGTVELWQYIEGQAREICRRYNYKEIRTPIFEHTELFLRGVGDTTDIVQKEMYSFQDRGERSLTLRPEGTAPVVRSYVENKMFGDATQPTKLYYIGQMFRYERPQAGRYRQFVQFGIEAIGSNDPAIDAEVIALAVEFYRGMGLKNIKVVLNSLGDAASRQAHRDALIAHFEPRIGEFCSDCQSRLEKNPLRILDCKKDRNHELMGTAPSITEYLNEDSAVYYDKVQELLTMMDVPFEKDPNLVRGLDYYQHTVFEIMSEAEGFGAITTLSGGGRYNGLVQEIGGPEMPGIGFAMSIERLIMALKAENIELPLEHSIDCYVVALGEKAKDHAAKVAFDLRKAGLSVEKDYLDRKMKAQFKSADRLKAKFVAVLGEDELDKGIINLKDMATGEQEEVALDVFASYVAEKLI.

It belongs to the class-II aminoacyl-tRNA synthetase family. In terms of assembly, homodimer.

The protein localises to the cytoplasm. It carries out the reaction tRNA(His) + L-histidine + ATP = L-histidyl-tRNA(His) + AMP + diphosphate + H(+). In Bacillus cereus (strain ATCC 14579 / DSM 31 / CCUG 7414 / JCM 2152 / NBRC 15305 / NCIMB 9373 / NCTC 2599 / NRRL B-3711), this protein is Histidine--tRNA ligase 2.